The sequence spans 313 residues: Ribosomal RNA small subunit methyltransferase H (313 aa).

S-adenosyl-L-methionine is bound by residues 35 to 37 (GGH), D55, F79, D101, and Q108.

This sequence belongs to the methyltransferase superfamily. RsmH family.

It localises to the cytoplasm. It catalyses the reaction cytidine(1402) in 16S rRNA + S-adenosyl-L-methionine = N(4)-methylcytidine(1402) in 16S rRNA + S-adenosyl-L-homocysteine + H(+). Specifically methylates the N4 position of cytidine in position 1402 (C1402) of 16S rRNA. The chain is Ribosomal RNA small subunit methyltransferase H from Shigella dysenteriae serotype 1 (strain Sd197).